The sequence spans 1448 residues: DNA-directed RNA polymerase subunit beta' (1448 aa).

Zn(2+) contacts are provided by C66, C68, C81, and C84. Mg(2+) contacts are provided by D474, D476, and D478. Zn(2+) is bound by residues C814, C888, C895, and C898. The disordered stretch occupies residues 1408–1448 (LEELQAAIGGDGESPSGDGAAGDGAPSEEDVEQIEASGSEN).

Belongs to the RNA polymerase beta' chain family. The RNAP catalytic core consists of 2 alpha, 1 beta, 1 beta' and 1 omega subunit. When a sigma factor is associated with the core the holoenzyme is formed, which can initiate transcription. Mg(2+) serves as cofactor. The cofactor is Zn(2+).

The enzyme catalyses RNA(n) + a ribonucleoside 5'-triphosphate = RNA(n+1) + diphosphate. DNA-dependent RNA polymerase catalyzes the transcription of DNA into RNA using the four ribonucleoside triphosphates as substrates. This Salinibacter ruber (strain DSM 13855 / M31) protein is DNA-directed RNA polymerase subunit beta'.